The following is a 511-amino-acid chain: Zinc finger CCCH-type with G patch domain-containing protein (511 aa).

Residues 157 to 180 form a C3H1-type zinc finger; the sequence is PCSYYLEGECRFDEARCRYSHGAL. The tract at residues 254 to 281 is disordered; sequence DQEDELTSEDSSSVNDGSSDEEESDMDD. Positions 271–281 are enriched in acidic residues; it reads SSDEEESDMDD. Positions 311-357 constitute a G-patch domain; it reads TRGIGSKLMEKMGYIHGTGLGSDGRGIVTPVSAQILPKGRSLDACME. Disordered regions lie at residues 409-433 and 478-511; these read GSDNKQQAEPEAKKAKANDLQQHST and MHNQKQELATLQAQERSLSKEQQTRKSKNKMFEF. A compositionally biased stretch (basic and acidic residues) spans 414–425; sequence QQAEPEAKKAKA. The span at 478–493 shows a compositional bias: polar residues; that stretch reads MHNQKQELATLQAQER. The span at 494 to 511 shows a compositional bias: basic and acidic residues; sequence SLSKEQQTRKSKNKMFEF.

It is found in the nucleus. Its function is as follows. Transcription repressor. The protein is Zinc finger CCCH-type with G patch domain-containing protein of Drosophila ananassae (Fruit fly).